The chain runs to 145 residues: Putative pre-16S rRNA nuclease (145 aa).

The protein belongs to the YqgF nuclease family.

It is found in the cytoplasm. In terms of biological role, could be a nuclease involved in processing of the 5'-end of pre-16S rRNA. The sequence is that of Putative pre-16S rRNA nuclease from Sulfurihydrogenibium sp. (strain YO3AOP1).